Consider the following 362-residue polypeptide: Acyl-CoA-binding domain-containing protein 3 (362 aa).

The N-terminal stretch at 1–22 (MEVFLEMLLTAVVALLFSFLLA) is a signal peptide. 2 disordered regions span residues 132–151 (QDEQ…SPEN) and 193–214 (VEKS…EKTE). Positions 192–221 (RVEKSSNMVEESDAEAENEEKTELTIEEDD) form a coiled coil. An ACB domain is found at 231-318 (LEKAFAAAVN…VSKEIPGLTK (88 aa)). An acyl-CoA-binding positions include 260–264 (FGLHK), Lys286, and Tyr305. The segment at 329-362 (METSVGLPPNSGSLEDPTNLVTTGVDESSKNGIP) is disordered.

It belongs to the ACBP family. Expressed in roots, stems, leaves, flowers and siliques.

The protein resides in the secreted. Its subcellular location is the extracellular space. Binds medium- and long-chain acyl-CoA esters with very high affinity. Can interact in vitro with arachidonyl-CoA, barely with oleoyl-CoA, but not with palmitoyl-CoA. This chain is Acyl-CoA-binding domain-containing protein 3 (ACBP3), found in Arabidopsis thaliana (Mouse-ear cress).